Consider the following 200-residue polypeptide: Inner membrane protein E199L (200 aa).

N-linked (GlcNAc...) asparagine; by host glycosylation occurs at Asn-131. The helical transmembrane segment at 150–170 threads the bilayer; that stretch reads INVMNHPFLTLILIILILIII.

It belongs to the asfivirus E199L family. Interacts with host PYCR2; this interaction results in autophagy activation. Post-translationally, contains intramolecular disulfide bonds.

Its subcellular location is the virion membrane. It localises to the host membrane. Functionally, essential for viral fusion with host endosomal membrane and core release. Not required for virus morphogenesis and egress. Induces complete autophagy through the interaction with and down-regulation of host PYCR2. The protein is Inner membrane protein E199L of Ornithodoros (relapsing fever ticks).